The sequence spans 213 residues: Orotate phosphoribosyltransferase (213 aa).

Lys26 contacts 5-phospho-alpha-D-ribose 1-diphosphate. 34–35 (FF) is a binding site for orotate. Residues 72 to 73 (YK), Arg99, Lys100, Lys103, His105, and 124 to 132 (DDVITAGTA) contribute to the 5-phospho-alpha-D-ribose 1-diphosphate site. Orotate is bound by residues Thr128 and Arg156.

It belongs to the purine/pyrimidine phosphoribosyltransferase family. PyrE subfamily. Homodimer. Mg(2+) is required as a cofactor.

The enzyme catalyses orotidine 5'-phosphate + diphosphate = orotate + 5-phospho-alpha-D-ribose 1-diphosphate. It participates in pyrimidine metabolism; UMP biosynthesis via de novo pathway; UMP from orotate: step 1/2. Its function is as follows. Catalyzes the transfer of a ribosyl phosphate group from 5-phosphoribose 1-diphosphate to orotate, leading to the formation of orotidine monophosphate (OMP). This Enterobacter sp. (strain 638) protein is Orotate phosphoribosyltransferase.